The primary structure comprises 247 residues: Probable transcriptional regulatory protein ETA_14870 (247 aa).

Residues 1–20 (MAGHSKWANTKHRKAAQDAK) are disordered.

Belongs to the TACO1 family.

The protein localises to the cytoplasm. The sequence is that of Probable transcriptional regulatory protein ETA_14870 from Erwinia tasmaniensis (strain DSM 17950 / CFBP 7177 / CIP 109463 / NCPPB 4357 / Et1/99).